Consider the following 127-residue polypeptide: Aspartate 1-decarboxylase (127 aa).

The active-site Schiff-base intermediate with substrate; via pyruvic acid is serine 25. Serine 25 carries the post-translational modification Pyruvic acid (Ser). A substrate-binding site is contributed by threonine 57. The Proton donor role is filled by tyrosine 58. A substrate-binding site is contributed by glycine 73 to alanine 75.

It belongs to the PanD family. As to quaternary structure, heterooctamer of four alpha and four beta subunits. Pyruvate is required as a cofactor. Post-translationally, is synthesized initially as an inactive proenzyme, which is activated by self-cleavage at a specific serine bond to produce a beta-subunit with a hydroxyl group at its C-terminus and an alpha-subunit with a pyruvoyl group at its N-terminus.

Its subcellular location is the cytoplasm. It carries out the reaction L-aspartate + H(+) = beta-alanine + CO2. It functions in the pathway cofactor biosynthesis; (R)-pantothenate biosynthesis; beta-alanine from L-aspartate: step 1/1. Catalyzes the pyruvoyl-dependent decarboxylation of aspartate to produce beta-alanine. The sequence is that of Aspartate 1-decarboxylase from Bacillus cereus (strain B4264).